The sequence spans 148 residues: Large ribosomal subunit protein bL9 (148 aa).

It belongs to the bacterial ribosomal protein bL9 family.

Binds to the 23S rRNA. The polypeptide is Large ribosomal subunit protein bL9 (Staphylococcus aureus (strain Newman)).